Here is a 1694-residue protein sequence, read N- to C-terminus: Homeobox-DDT domain protein RLT2 (1694 aa).

The disordered stretch occupies residues 1–24 (MEGGSEKTTPEGCGGESKSKRKMK). Residues 17–76 (SKSKRKMKTAAQLEVLENTYSAEPYPSEAIRADLSVKLNLSDRQLQMWFCHRRLKERKST) constitute a DNA-binding region (homeobox). The DDT domain maps to 514-573 (DENVANLLMVWRFLITFADVLGLWPFTLDEFAQAFHDYDPRLMGEIHIVLLKTIIKDIEG). Residues 696–765 (GTVKFAAFHV…APSTYCVRAS (70 aa)) enclose the HTH HARE-type domain. Positions 795–816 (EDVDDAERDEDSESDVGEDPEV) are enriched in acidic residues. 4 disordered regions span residues 795-822 (EDVD…NLKK), 1450-1541 (KQEE…ICNE), 1555-1639 (AKTS…MNMK), and 1655-1674 (EDSY…AATR). A phosphoserine mark is found at S806 and S808. A compositionally biased stretch (gly residues) spans 1459 to 1470 (GLGGVSSSGRGG). Basic residues-rich tracts occupy residues 1471 to 1485 (RPPR…RGNG) and 1515 to 1531 (GGRK…RKRP). 3 stretches are compositionally biased toward acidic residues: residues 1561–1578 (DNDD…DDGE), 1589–1605 (EDYD…DFDG), and 1624–1635 (DEYEEEEEEEED).

As to quaternary structure, interacts with CHR11. Interacts (via the DDT domain) with CHR11 (via C-terminus). Highly expressed in growing tissues such as inflorescence and flower meristems, young leaves and floral organs. Expressed in roots, rosette and cauline leaves, stems, flowers, inflorescences and siliques.

It localises to the nucleus. Its function is as follows. Transcriptional regulator required for the maintenance of the plant vegetative phase. In association with CHR11 or CHR17 may prevent the early activation of the vegetative-to-reproductive transition by regulating key genes that contribute to flower timing, such as FT, SEP1, SEP3, AGL8/FUL, SOC1 and FLC. Involved in the transcriptional regulation of seed-specific gene expression. The polypeptide is Homeobox-DDT domain protein RLT2 (Arabidopsis thaliana (Mouse-ear cress)).